A 481-amino-acid polypeptide reads, in one-letter code: Aspartyl/glutamyl-tRNA(Asn/Gln) amidotransferase subunit B (481 aa).

Belongs to the GatB/GatE family. GatB subfamily. As to quaternary structure, heterotrimer of A, B and C subunits.

It carries out the reaction L-glutamyl-tRNA(Gln) + L-glutamine + ATP + H2O = L-glutaminyl-tRNA(Gln) + L-glutamate + ADP + phosphate + H(+). The catalysed reaction is L-aspartyl-tRNA(Asn) + L-glutamine + ATP + H2O = L-asparaginyl-tRNA(Asn) + L-glutamate + ADP + phosphate + 2 H(+). Functionally, allows the formation of correctly charged Asn-tRNA(Asn) or Gln-tRNA(Gln) through the transamidation of misacylated Asp-tRNA(Asn) or Glu-tRNA(Gln) in organisms which lack either or both of asparaginyl-tRNA or glutaminyl-tRNA synthetases. The reaction takes place in the presence of glutamine and ATP through an activated phospho-Asp-tRNA(Asn) or phospho-Glu-tRNA(Gln). This chain is Aspartyl/glutamyl-tRNA(Asn/Gln) amidotransferase subunit B, found in Pseudomonas savastanoi pv. phaseolicola (strain 1448A / Race 6) (Pseudomonas syringae pv. phaseolicola (strain 1448A / Race 6)).